Consider the following 186-residue polypeptide: Ribosome-recycling factor (186 aa).

This sequence belongs to the RRF family.

It is found in the cytoplasm. In terms of biological role, responsible for the release of ribosomes from messenger RNA at the termination of protein biosynthesis. May increase the efficiency of translation by recycling ribosomes from one round of translation to another. In Chelativorans sp. (strain BNC1), this protein is Ribosome-recycling factor.